We begin with the raw amino-acid sequence, 102 residues long: Putative ribosomal protein uL13-like (102 aa).

It belongs to the universal ribosomal protein uL13 family.

This is Putative ribosomal protein uL13-like (RPL13AP3) from Homo sapiens (Human).